The primary structure comprises 229 residues: Cytochrome b translational activator protein CBS1, mitochondrial (229 aa).

The N-terminal 25 residues, 1–25 (MLRTKVFATTVARISGIRRYIPIRT), are a transit peptide targeting the mitochondrion.

It localises to the mitochondrion inner membrane. Its function is as follows. mRNA-specific translational activator of cytochrome b. The cytochrome b (COB) leader RNA may represent the target sequence for CBS1 and CBS2, tethering the COB mRNA to the inner mitochondrial membrane, where cotranslational insertion of cytochrome b into the membrane can occur. This chain is Cytochrome b translational activator protein CBS1, mitochondrial (CBS1), found in Saccharomyces cerevisiae (strain ATCC 204508 / S288c) (Baker's yeast).